The following is a 10624-amino-acid chain: Extracellular matrix-binding protein ebh (10624 aa).

A signal peptide spans 1–39 (MNYRDKIQKFSIRKYTVGTFSTVIATLVFLGFNTSQAHA). Polar residues predominate over residues 41-59 (ETNQPASVVKQKQQSNNEQ). 4 disordered regions span residues 41-152 (ETNQ…GNDN), 250-277 (PQRQ…PRSV), 1347-1372 (NEKA…NATT), and 2418-2438 (TITP…TLTA). The segment covering 65–78 (SQVQNSQNSQNSQS) has biased composition (low complexity). Positions 79–117 (LSATHENEQPNNSQANLVNQKVAQSSTTNDEQPASQNVN) are enriched in polar residues. The segment covering 130-140 (PDKEESKHKQN) has biased composition (basic and acidic residues). 4 stretches are compositionally biased toward polar residues: residues 141 to 151 (ESQSANKNGND), 250 to 266 (PQRQ…QTRS), 1360 to 1372 (YRTT…NATT), and 2427 to 2438 (HSVSSNPSTLTA). FIVAR domains are found at residues 2524–2580 (AKNH…VSDA), 2610–2666 (SKNN…ISDE), 2687–2750 (DTHA…VQSA), 2780–2836 (AKTK…IAAE), 2864–2919 (AKTQ…IRQN), 2947–3002 (AKNQ…INTN), 3030–3085 (AKTQ…INDK), 3154–3212 (AMTK…VNQK), 3280–3339 (AMTG…VNNA), 3407–3465 (AMGN…VNRA), 3533–3591 (AMGN…VTEA), 3659–3717 (AMNT…ITQK), 3785–3843 (AMAN…VEAA), 3911–3969 (AMGN…VEQA), 4037–4095 (AMGQ…VTAA), 4163–4221 (AMKG…ITQA), 4289–4347 (QMGN…VEAA), 4415–4473 (AMAN…VENA), 4541–4599 (AMGT…INQI), 4667–4725 (AMGQ…VDRA), 4793–4851 (AMNS…VDNA), 4919–4977 (AMGA…INDM), 5045–5103 (AMTA…VNSA), 5171–5229 (AMKG…ITQA), 5297–5355 (AMHS…VEQA), 5423–5481 (AMGQ…VERA), 5549–5607 (AMTA…VTNA), 5675–5733 (AMKG…INQA), 5801–5859 (AMTN…VETA), 6053–6111 (AMNQ…INQK), 6179–6236 (AMGN…VQAA), 6304–6362 (AMGQ…VEAA), 6430–6488 (AMQR…VEQA), 6556–6614 (AMDQ…VTAA), 6682–6740 (AMNQ…VTQA), 6808–6866 (AMER…VEAA), 6934–6992 (AMGN…VEAA), 7060–7118 (AMDK…INQA), 7186–7244 (AMGN…VEQA), 7312–7370 (AMTQ…ITAA), 7438–7496 (AMTQ…IQQA), 7564–7622 (AMTN…VEQA), 7690–7748 (AMTQ…VAQA), 7816–7874 (AMGT…VTKA), 7942–8000 (AMGN…ITRA), 8068–8129 (AMDQ…ITNE), 8194–8252 (AMEL…VNGA), 8320–8378 (AMGN…VEQA), 8446–8503 (AMHG…INQV), 8571–8629 (LMDA…VSSA), 8697–8755 (AMKA…IDQA), 8823–8881 (AMEA…VEQL), 8949–9007 (AMQA…VEQL), 9075–9133 (AMET…VEQA), 9201–9255 (SMDQ…VDQA), 9323–9382 (AMDQ…VIKL), and 9577–9633 (AMET…INGA). Residues 10430-10450 (IKNAIGVVGISGLLASFWFFI) traverse the membrane as a helical segment. The disordered stretch occupies residues 10527–10624 (RRKEDEEDVE…KKKKSKKNKK (98 aa)). Basic and acidic residues-rich tracts occupy residues 10542–10552 (TDEKVLKDNEH) and 10591–10601 (QKDNQSKDKKS). A compositionally biased stretch (basic residues) spans 10606-10624 (TSKKVAAKKKKKKSKKNKK).

Its subcellular location is the cell membrane. This Staphylococcus aureus (strain JH1) protein is Extracellular matrix-binding protein ebh (ebh).